The primary structure comprises 218 residues: Leucine-rich repeat protein 2 (218 aa).

A signal peptide spans 1–27; sequence MVAQNSRRELLAASLILTLALIRLTEA. 5 LRR repeats span residues 69–93, 94–117, 119–141, 142–165, and 167–190; these read HHQV…LGKL, EHLQ…LGNL, SLIS…LGKL, KSLV…LTVI, and SLKV…PFEH.

Functionally, probably involved in plant defense response. The sequence is that of Leucine-rich repeat protein 2 from Arabidopsis thaliana (Mouse-ear cress).